Reading from the N-terminus, the 137-residue chain is Large ribosomal subunit protein uL16c (137 aa).

It belongs to the universal ribosomal protein uL16 family. In terms of assembly, part of the 50S ribosomal subunit.

It localises to the plastid. Its subcellular location is the chloroplast. The polypeptide is Large ribosomal subunit protein uL16c (Trieres chinensis (Marine centric diatom)).